The primary structure comprises 511 residues: Sorting nexin MVP1 (511 aa).

The tract at residues 1-36 is disordered; that stretch reads MDNYEGSDPWNTSSNAWTKDDDHVVSTTNSEPSLNG. The segment covering 25-36 has biased composition (polar residues); it reads VSTTNSEPSLNG. The PX domain occupies 128-247; it reads DADIIIIEEI…TFLTVRTDLT (120 aa). Residues arginine 172, serine 174, lysine 198, and arginine 213 each coordinate a 1,2-diacyl-sn-glycero-3-phospho-(1D-myo-inositol-3-phosphate).

It belongs to the sorting nexin family. As to quaternary structure, homodimer. Forms an autoinhibited tetramer consisting of 2 homodimers that self-interact, wherein the membrane-interacting BAR surfaces are sequestered and the PX lipid-binding sites are occluded. Interacts with VPS1.

Its subcellular location is the cytoplasm. The protein localises to the endosome membrane. Functionally, required for vacuolar protein sorting. Component of the retromer-mediated endosome-to-Golgi retrograde pathway. Required for efficient cargo export from the endosome, promoting VPS1-mediated fission of retromer-coated tubules that bud from the endosome. In Saccharomyces cerevisiae (strain ATCC 204508 / S288c) (Baker's yeast), this protein is Sorting nexin MVP1 (MVP1).